A 336-amino-acid polypeptide reads, in one-letter code: Phosphate acyltransferase (336 aa).

It belongs to the PlsX family. In terms of assembly, homodimer. Probably interacts with PlsY.

Its subcellular location is the cytoplasm. It carries out the reaction a fatty acyl-[ACP] + phosphate = an acyl phosphate + holo-[ACP]. Its pathway is lipid metabolism; phospholipid metabolism. Functionally, catalyzes the reversible formation of acyl-phosphate (acyl-PO(4)) from acyl-[acyl-carrier-protein] (acyl-ACP). This enzyme utilizes acyl-ACP as fatty acyl donor, but not acyl-CoA. The chain is Phosphate acyltransferase from Pseudomonas putida (strain ATCC 700007 / DSM 6899 / JCM 31910 / BCRC 17059 / LMG 24140 / F1).